The chain runs to 164 residues: Cyclic pyranopterin monophosphate synthase (164 aa).

Substrate-binding positions include 75–77 and 116–117; these read MCH and ME. The active site involves aspartate 131.

It belongs to the MoaC family. In terms of assembly, homohexamer; trimer of dimers.

The enzyme catalyses (8S)-3',8-cyclo-7,8-dihydroguanosine 5'-triphosphate = cyclic pyranopterin phosphate + diphosphate. Its pathway is cofactor biosynthesis; molybdopterin biosynthesis. Catalyzes the conversion of (8S)-3',8-cyclo-7,8-dihydroguanosine 5'-triphosphate to cyclic pyranopterin monophosphate (cPMP). The chain is Cyclic pyranopterin monophosphate synthase from Staphylococcus aureus (strain USA300).